Consider the following 543-residue polypeptide: Zinc metalloproteinase (543 aa).

Positions 1-24 (MHPNYYLSPLAVAIALGIASPVKA) are cleaved as a signal peptide. A propeptide spanning residues 25–207 (ADPIPLQKSS…PFVQWDDVKT (183 aa)) is cleaved from the precursor. Residue His-377 participates in Zn(2+) binding. Glu-378 is an active-site residue. 2 residues coordinate Zn(2+): His-381 and Glu-401. Catalysis depends on His-463, which acts as the Proton donor.

The protein belongs to the peptidase M4 family. Requires Zn(2+) as cofactor.

It localises to the secreted. Functionally, cleaves collagen, gelatin, casein, alpha-1-antitrypsin, and bovine insulin. May play a role in the pathogenesis of legionnaires disease. The sequence is that of Zinc metalloproteinase from Legionella pneumophila.